The chain runs to 88 residues: Large ribosomal subunit protein bL27 (88 aa).

Positions 1–13 (MATKKGASSSSNG) are enriched in polar residues. A disordered region spans residues 1–23 (MATKKGASSSSNGRDSEAKRLGV).

Belongs to the bacterial ribosomal protein bL27 family.

The polypeptide is Large ribosomal subunit protein bL27 (Corynebacterium urealyticum (strain ATCC 43042 / DSM 7109)).